Reading from the N-terminus, the 260-residue chain is Ubiquinone/menaquinone biosynthesis C-methyltransferase UbiE (260 aa).

Residues threonine 83, aspartate 104, and 132 to 133 contribute to the S-adenosyl-L-methionine site; that span reads NA.

Belongs to the class I-like SAM-binding methyltransferase superfamily. MenG/UbiE family.

The catalysed reaction is a 2-demethylmenaquinol + S-adenosyl-L-methionine = a menaquinol + S-adenosyl-L-homocysteine + H(+). The enzyme catalyses a 2-methoxy-6-(all-trans-polyprenyl)benzene-1,4-diol + S-adenosyl-L-methionine = a 5-methoxy-2-methyl-3-(all-trans-polyprenyl)benzene-1,4-diol + S-adenosyl-L-homocysteine + H(+). Its pathway is quinol/quinone metabolism; menaquinone biosynthesis; menaquinol from 1,4-dihydroxy-2-naphthoate: step 2/2. It participates in cofactor biosynthesis; ubiquinone biosynthesis. In terms of biological role, methyltransferase required for the conversion of demethylmenaquinol (DMKH2) to menaquinol (MKH2) and the conversion of 2-polyprenyl-6-methoxy-1,4-benzoquinol (DDMQH2) to 2-polyprenyl-3-methyl-6-methoxy-1,4-benzoquinol (DMQH2). In Bartonella bacilliformis (strain ATCC 35685 / KC583 / Herrer 020/F12,63), this protein is Ubiquinone/menaquinone biosynthesis C-methyltransferase UbiE.